An 856-amino-acid chain; its full sequence is Envelope glycoprotein gp150 (856 aa).

Over 1–785 the chain is Extracellular; sequence MAEGFVANGQ…WIGNIPQYLK (785 aa). N-linked (GlcNAc...) asparagine; by host glycans are attached at residues Asn-220, Asn-258, Asn-269, Asn-274, Asn-298, Asn-330, Asn-336, Asn-342, Asn-418, Asn-422, Asn-448, Asn-469, Asn-481, Asn-499, Asn-518, Asn-531, Asn-548, Asn-551, and Asn-556. The tract at residues 616-636 is fusion peptide; it reads VMLALATVLSMAGAGTGATAI. Residues 643 to 693 are a coiled coil; it reads HQVLATQQEAIEKVTEALKITNLRLVTLEHQVLVIGLKVEAMEKFLYTAFA. An immunosuppression region spans residues 662 to 680; it reads ITNLRLVTLEHQVLVIGLK. Asn-717, Asn-721, Asn-729, and Asn-737 each carry an N-linked (GlcNAc...) asparagine; by host glycan. Positions 736-772 form a coiled coil; the sequence is YNQTKDLQKKFYGIIMDIEQNNVQGKKGLQQLQKWED. The chain crosses the membrane as a helical span at residues 786–806; that stretch reads GLLGSIVGIGLGILLLILCLP. Residues 807-856 lie on the Cytoplasmic side of the membrane; sequence TLVDCIRNCIHKILGYTVIAMPEVDGEEIQPQMELRRNGRQCGMSEKEEE.

In terms of assembly, the mature envelope protein (Env) consists of a trimer of SU-TM heterodimers attached by noncovalent interactions or by a labile interchain disulfide bond. Specific enzymatic cleavages in vivo yield mature proteins. Envelope glycoproteins are synthesized as an inactive precursor that is N-glycosylated and processed likely by host cell furin or by a furin-like protease in the Golgi to yield the mature SU and TM proteins. The cleavage site between SU and TM requires the minimal sequence [KR]-X-[KR]-R.

The protein localises to the virion membrane. It is found in the host cell membrane. Functionally, the surface protein (SU) attaches the virus to the host cell by binding to its receptor. This interaction triggers the refolding of the transmembrane protein (TM) and is thought to activate its fusogenic potential by unmasking its fusion peptide. Fusion occurs at the host cell plasma membrane. The transmembrane protein (TM) acts as a class I viral fusion protein. Under the current model, the protein has at least 3 conformational states: pre-fusion native state, pre-hairpin intermediate state, and post-fusion hairpin state. During viral and target cell membrane fusion, the coiled coil regions (heptad repeats) assume a trimer-of-hairpins structure, positioning the fusion peptide in close proximity to the C-terminal region of the ectodomain. The formation of this structure appears to drive apposition and subsequent fusion of viral and target cell membranes. Membranes fusion leads to delivery of the nucleocapsid into the cytoplasm. In Feline immunodeficiency virus (strain UT-113) (FIV), this protein is Envelope glycoprotein gp150 (env).